Consider the following 131-residue polypeptide: uncharacterized protein (131 aa).

A signal peptide spans 1–19 (MRESLFIIFFQFVCHSSNS). The next 2 membrane-spanning stretches (helical) occupy residues 33–53 (PLLT…ALFF) and 111–131 (VSFN…FFLF).

Its subcellular location is the membrane. This is an uncharacterized protein from Saccharomyces cerevisiae (strain ATCC 204508 / S288c) (Baker's yeast).